The sequence spans 529 residues: Bifunctional purine biosynthesis protein PurH (529 aa).

Positions 1-148 constitute an MGS-like domain; that stretch reads MQQRRPVRRA…KNHKDVAIVV (148 aa).

This sequence belongs to the PurH family.

The catalysed reaction is (6R)-10-formyltetrahydrofolate + 5-amino-1-(5-phospho-beta-D-ribosyl)imidazole-4-carboxamide = 5-formamido-1-(5-phospho-D-ribosyl)imidazole-4-carboxamide + (6S)-5,6,7,8-tetrahydrofolate. The enzyme catalyses IMP + H2O = 5-formamido-1-(5-phospho-D-ribosyl)imidazole-4-carboxamide. Its pathway is purine metabolism; IMP biosynthesis via de novo pathway; 5-formamido-1-(5-phospho-D-ribosyl)imidazole-4-carboxamide from 5-amino-1-(5-phospho-D-ribosyl)imidazole-4-carboxamide (10-formyl THF route): step 1/1. The protein operates within purine metabolism; IMP biosynthesis via de novo pathway; IMP from 5-formamido-1-(5-phospho-D-ribosyl)imidazole-4-carboxamide: step 1/1. In Citrobacter koseri (strain ATCC BAA-895 / CDC 4225-83 / SGSC4696), this protein is Bifunctional purine biosynthesis protein PurH.